A 231-amino-acid polypeptide reads, in one-letter code: Putative carboxymethylenebutenolidase (231 aa).

Residues Cys-118, Asp-167, and His-199 contribute to the active site.

The protein belongs to the dienelactone hydrolase family.

The enzyme catalyses 2-(5-oxo-2,5-dihydrofuran-2-ylidene)acetate + H2O = 4-oxohex-2-enedioate + H(+). This is Putative carboxymethylenebutenolidase from Aquifex aeolicus (strain VF5).